The following is a 423-amino-acid chain: UPF0229 protein PSPPH_0628 (423 aa).

The segment at 65–110 (HHGRGGKQTVVHPGNKEFTTGEHIARPQGGGGGKGPGKAGNSGEGM) is disordered. Residues 92-107 (QGGGGGKGPGKAGNSG) are compositionally biased toward gly residues.

This sequence belongs to the UPF0229 family.

The chain is UPF0229 protein PSPPH_0628 from Pseudomonas savastanoi pv. phaseolicola (strain 1448A / Race 6) (Pseudomonas syringae pv. phaseolicola (strain 1448A / Race 6)).